The sequence spans 682 residues: E3 ubiquitin ligase Rnf157 (682 aa).

Gly2 carries N-myristoyl glycine lipidation. The RING-type; degenerate zinc finger occupies 277 to 317 (CVVCLSDVRDTLILPCRHCASCNVHCADTLRYQANNCPICR). The short motif at 330-333 (RKKL) is the D-box 1 element. 2 disordered regions span residues 440 to 604 (QNSS…VQED) and 655 to 682 (NTQRRRLSPSSLEDPEEDRPCVWDPLAV). Positions 479–538 (ESENLTLSSSGAVDQSSCTGTPLSSTISSPEDPASSSLAQSVMSMASSQISTDTVSSMSG) are enriched in polar residues. Positions 585-597 (QDAEGNDIMEEED) are enriched in acidic residues. A D-box 2 motif is present at residues 658–661 (RRRL). A phosphoserine mark is found at Ser662, Ser664, and Ser665.

Interacts with APBB1. Interacts with CHD1; CHD1-binding controls RNF157 stability. Also interacts with ATRN, MEGF8, TECR, MSI2, PLRG1, BYSL, MTERF3, PSMA1, MRPS18B, PRPF4, FASTKD2, SLC25A1, SMU1, CNOT9, MRPS2, MAGT1, FXR2, EMD, PSMD8, HDAC1, RAN, HSD17B12, TXNDC5 and MRPL19. Predominantly expressed in the brain.

The protein localises to the cytoplasm. The enzyme catalyses S-ubiquitinyl-[E2 ubiquitin-conjugating enzyme]-L-cysteine + [acceptor protein]-L-lysine = [E2 ubiquitin-conjugating enzyme]-L-cysteine + N(6)-ubiquitinyl-[acceptor protein]-L-lysine.. In terms of biological role, E3 ubiquitin ligase that ubiquitinates APBB1 for its degradation by the proteasome and thus prevents apoptosis and promotes survival of neurons. Has a dual role in neurons as it is also required for dendrite growth and maintenance for which its ligase activity is not critical. May act as a scaffold molecule to regulate this process. Acts as a downstream effector of the interconnected PI3K and MAPK signaling pathways and thus participates in the regulation of the cell cycle. The sequence is that of E3 ubiquitin ligase Rnf157 (Rnf157) from Rattus norvegicus (Rat).